We begin with the raw amino-acid sequence, 229 residues long: MAKKKAFTPLLYLASIVFLPWWISLSFNKSLKSWITNWWDTRQSETFLNDIQEKSILEQFIEVEELFLLDEMIKEYPETHLQKLRIGIQKETIQLIKLHNEDHIHTILHFSTNLICFVILSGYSILGNEELLILNSWAQEFLYNLSDTIKAFSILLLTDLCIGFHSPHGWELMIGSIYKDFGFTHNDQIISGLVSTFPVILDTIFKYWIFRYLNRVSPSLVVIYHSMND.

4 helical membrane-spanning segments follow: residues 7 to 27 (FTPL…SLSF), 114 to 134 (LICF…LLIL), 154 to 174 (ILLL…ELMI), and 189 to 209 (IISG…KYWI).

The protein belongs to the CemA family.

Its subcellular location is the plastid. It localises to the chloroplast inner membrane. It carries out the reaction K(+)(in) + H(+)(out) = K(+)(out) + H(+)(in). In terms of biological role, contributes to K(+)/H(+) antiport activity by supporting proton efflux to control proton extrusion and homeostasis in chloroplasts in a light-dependent manner to modulate photosynthesis. Prevents excessive induction of non-photochemical quenching (NPQ) under continuous-light conditions. Indirectly promotes efficient inorganic carbon uptake into chloroplasts. This chain is Potassium/proton antiporter CemA, found in Gossypium barbadense (Sea Island cotton).